Consider the following 766-residue polypeptide: Exocyst complex component 6 (766 aa).

The stretch at 28–90 (NTKQIGDQLE…SLDTSLRQIS (63 aa)) forms a coiled coil.

It belongs to the SEC15 family. The exocyst complex is composed of Sec3/Exoc1, Sec5/Exoc2, Sec6/Exoc3, Sec8/Exoc4, Sec10/Exoc5, Sec15/Exoc6, Exo70/Exoc7 and Exo84/Exoc8. Interacts with RAB3, RAB8, RAB11 and RAB27. In terms of tissue distribution, detected in developing rhabdomeres in photoreceptor cells.

Its subcellular location is the cell projection. It localises to the rhabdomere. In terms of biological role, component of the exocyst complex involved in the docking of exocytic vesicles with fusion sites on the plasma membrane. In Drosophila melanogaster (Fruit fly), this protein is Exocyst complex component 6.